The primary structure comprises 715 residues: Polyribonucleotide nucleotidyltransferase (715 aa).

Mg(2+)-binding residues include aspartate 500 and aspartate 506. One can recognise a KH domain in the interval 567–634 (PKVKMIRINP…AYIESLVREA (68 aa)). Residues 637 to 712 (GELYEAKVTR…ERGRVDLSRK (76 aa)) form the S1 motif domain.

Belongs to the polyribonucleotide nucleotidyltransferase family. Mg(2+) serves as cofactor.

It is found in the cytoplasm. It catalyses the reaction RNA(n+1) + phosphate = RNA(n) + a ribonucleoside 5'-diphosphate. Functionally, involved in mRNA degradation. Catalyzes the phosphorolysis of single-stranded polyribonucleotides processively in the 3'- to 5'-direction. In Acholeplasma laidlawii (strain PG-8A), this protein is Polyribonucleotide nucleotidyltransferase.